We begin with the raw amino-acid sequence, 337 residues long: Phenylalanine--tRNA ligase alpha subunit (337 aa).

E252 is a binding site for Mg(2+).

The protein belongs to the class-II aminoacyl-tRNA synthetase family. Phe-tRNA synthetase alpha subunit type 1 subfamily. Tetramer of two alpha and two beta subunits. Requires Mg(2+) as cofactor.

The protein resides in the cytoplasm. It catalyses the reaction tRNA(Phe) + L-phenylalanine + ATP = L-phenylalanyl-tRNA(Phe) + AMP + diphosphate + H(+). This Saccharophagus degradans (strain 2-40 / ATCC 43961 / DSM 17024) protein is Phenylalanine--tRNA ligase alpha subunit.